Here is a 356-residue protein sequence, read N- to C-terminus: Chitin elicitor-binding protein (356 aa).

A signal peptide spans 1–28 (MASLTAALATPAAAALLLLVLLAAPASA). N-linked (GlcNAc...) asparagine glycosylation occurs at Asn30. 4 disulfide bridges follow: Cys33–Cys100, Cys41–Cys164, Cys98–Cys162, and Cys100–Cys164. 50–51 (PN) provides a ligand contact to chitin. N-linked (GlcNAc...) asparagine glycosylation is found at Asn63 and Asn89. 2 LysM domains span residues 111–158 (PIYV…TLWI) and 175–219 (LAYS…ILDV). Chitin is bound by residues 117–123 (PQDGLDA), Asn142, 145–152 (PDPNKINV), Thr155, and Gly182. An N-linked (GlcNAc...) asparagine glycan is attached at Asn151. Asn184 carries an N-linked (GlcNAc...) asparagine glycan. Residues Ser186 and 211–213 (LQM) contribute to the chitin site. 2 disulfide bridges follow: Cys224–Cys257 and Cys252–Cys274. Asn265, Asn281, Asn290, Asn306, and Asn319 each carry an N-linked (GlcNAc...) asparagine glycan. The helical transmembrane segment at 336–356 (RSMWSMSVISFHMVLIIICFL) threads the bilayer.

In terms of assembly, forms homooligomer. Interacts with CERK1. Binds to chitin oligosaccharide elicitor. Interacts with LYP4 and LYP6. N-glycosylated. Expressed in seedlings, roots, shoots, stems and flowers.

The protein localises to the cell membrane. In terms of biological role, chitin elicitor-binding protein involved in the perception and transduction of chitin oligosaccharide elicitor signal for defense responses. This chain is Chitin elicitor-binding protein, found in Oryza sativa subsp. japonica (Rice).